Consider the following 278-residue polypeptide: Putative B3 domain-containing protein At2g21920 (278 aa).

The TF-B3 DNA-binding region spans 168–275; it reads ISKTLSRTDV…KFIILNFEYN (108 aa).

It is found in the nucleus. The chain is Putative B3 domain-containing protein At2g21920 from Arabidopsis thaliana (Mouse-ear cress).